Here is a 313-residue protein sequence, read N- to C-terminus: Putative zinc finger protein 077L (313 aa).

The segment at 174–199 (CFSITKGIECPHYSCTYIHNYSQIEH) adopts a C3H1-type zinc-finger fold. The tract at residues 294–313 (SDDSDSENNDEDDDWKIDLF) is disordered. Acidic residues predominate over residues 296–313 (DSDSENNDEDDDWKIDLF).

This sequence belongs to the IIV-6 077L family.

This Invertebrate iridescent virus 6 (IIV-6) protein is Putative zinc finger protein 077L.